The chain runs to 179 residues: Bifunctional protein PyrR (179 aa).

The PRPP-binding motif lies at 99-111 (VILIDDVLYTGRT).

This sequence belongs to the purine/pyrimidine phosphoribosyltransferase family. PyrR subfamily. As to quaternary structure, homodimer and homohexamer; in equilibrium.

The enzyme catalyses UMP + diphosphate = 5-phospho-alpha-D-ribose 1-diphosphate + uracil. Functionally, regulates transcriptional attenuation of the pyrimidine nucleotide (pyr) operon by binding in a uridine-dependent manner to specific sites on pyr mRNA. This disrupts an antiterminator hairpin in the RNA and favors formation of a downstream transcription terminator, leading to a reduced expression of downstream genes. In terms of biological role, also displays a weak uracil phosphoribosyltransferase activity which is not physiologically significant. The chain is Bifunctional protein PyrR from Latilactobacillus sakei subsp. sakei (strain 23K) (Lactobacillus sakei subsp. sakei).